The following is a 3175-amino-acid chain: Replicase polyprotein 1ab (3175 aa).

Residues 25–44 form a C4-type; atypical zinc finger; the sequence is CEHGAGLCCEVDGSTLCAEC. A Peptidase C31 domain is found at 66–156; it reads SPVPVGHKFL…PAANSLIVTT (91 aa). The Peptidase C32 domain occupies 157-260; sequence DQEQDGFCWL…WSCLPAGNYG (104 aa). Residues Cys164 and His230 each act as for Nsp1 papain-like cysteine proteinase activity in the active site. The OTU-like stretch occupies residues 261-339; the sequence is GYNPPGDGAC…KQHWRVKRAK (79 aa). In terms of domain architecture, Peptidase C33 spans 261–360; that stretch reads GYNPPGDGAC…RGICNCQRMS (100 aa). Cys270 acts as the For Nsp2 cysteine proteinase activity in catalysis. Residue Cys319 coordinates Zn(2+). His332 serves as the catalytic For Nsp2 cysteine proteinase activity. Residues Cys349, Cys354, and Cys356 each coordinate Zn(2+). The segment at 386 to 451 is disordered; that stretch reads VVTPEGQPRP…TRLQGASTQE (66 aa). 7 helical membrane-spanning segments follow: residues 530 to 550, 551 to 571, 625 to 645, 829 to 849, 903 to 923, 935 to 955, and 977 to 997; these read AVIA…SFAI, GLIP…SSAN, FDAA…ILYL, LIGG…STFT, YWIA…RLAI, LVLL…SLAG, and LVTM…LMGL. An HD1 region spans residues 530 to 645; the sequence is AVIACLLPIW…DLCSFAILYL (116 aa). The HD2 stretch occupies residues 829 to 997; that stretch reads LIGGWIYGIC…ALAVYSLMGL (169 aa). The Peptidase S32 domain maps to 1065–1268; the sequence is GLFRSPKARG…MLIDGLSNRE (204 aa). Residues His1103, Asp1129, and Ser1184 each act as charge relay system; for 3C-like serine proteinase activity in the active site. The next 4 helical transmembrane spans lie at 1291–1311, 1333–1353, 1355–1375, and 1385–1405; these read AYLP…KSVG, CLFH…WFYI, AAGT…MLFV, and GWAI…AALG. Residues 1291 to 1405 are HD3; the sequence is AYLPYVLGFF…SITMLAAALG (115 aa). An N-linked (GlcNAc...) asparagine; by host glycan is attached at Asn1501. The segment at 1577 to 1614 is disordered; the sequence is NDTPVKPMPSRRRRKGLPKGAQLEWDRHQEEKRNAGDD. Residues 1600-1612 show a composition bias toward basic and acidic residues; the sequence is EWDRHQEEKRNAG. A NiRAN domain is found at 1716-1883; the sequence is LANPVEAVNQ…DKVAAAVSGD (168 aa). Residues 2116-2251 form the RdRp catalytic domain; it reads KYCLETDLES…TTPNQHYAAS (136 aa). The 68-residue stretch at 2371-2438 folds into the AV ZBD domain; the sequence is SAVCTVCGAA…SPKQMVPKVP (68 aa). The Zn(2+) site is built by Cys2374, Cys2377, Cys2387, Cys2392, Cys2395, His2399, His2402, Cys2403, Cys2412, His2414, Cys2423, and Cys2426. Residues 2496–2661 form the (+)RNA virus helicase ATP-binding domain; sequence PGSHIAVPLQ…LRHFVSLEPL (166 aa). Residue 2528-2535 participates in ATP binding; sequence GPPGSGKT. The (+)RNA virus helicase C-terminal domain maps to 2662 to 2793; that stretch reads RVCHRFGAAV…PPTACHLGQE (132 aa). Positions 2840-2930 constitute an AV-Nsp11N/CoV-Nsp15M domain; that stretch reads KISCLPRVAQ…LTEWVDGKAR (91 aa). In terms of domain architecture, NendoU spans 2932-3054; that stretch reads LPDSLFSSGR…MVWRNATFYV (123 aa). Residues His2963, His2978, and Lys3007 contribute to the active site.

It belongs to the arteriviridae polyprotein family. In terms of assembly, nsp1 interacts with cellular transcription cofactor SND1/p100. Specific enzymatic cleavages in vivo by its own proteases yield mature proteins. There are two alternative pathways for processing. Either nsp4-5 is cleaved, which represents the major pathway or the nsp5-6 and nsp6-7 are processed, which represents the minor pathway. The major pathway occurs when nsp2 acts as a cofactor for nsp4.

The protein resides in the host nucleus. The protein localises to the host cytoplasm. It localises to the host membrane. It is found in the host perinuclear region. It carries out the reaction RNA(n) + a ribonucleoside 5'-triphosphate = RNA(n+1) + diphosphate. The enzyme catalyses ATP + H2O = ADP + phosphate + H(+). The catalysed reaction is Thiol-dependent hydrolysis of ester, thioester, amide, peptide and isopeptide bonds formed by the C-terminal Gly of ubiquitin (a 76-residue protein attached to proteins as an intracellular targeting signal).. It catalyses the reaction uridylyl-uridylyl-ribonucleotide-RNA = a 3'-end uridylyl-2',3'-cyclophospho-uridine-RNA + a 5'-end dephospho-ribonucleoside-RNA. In terms of biological role, the replicase polyprotein 1ab is a multifunctional protein: it contains the activities necessary for the transcription of negative stranded RNA, leader RNA, subgenomic mRNAs and progeny virion RNA as well as proteinases responsible for the cleavage of the polyprotein into functional products. Its function is as follows. Nsp1 is essential for viral subgenomic mRNA synthesis. Functionally, nsp2 cysteine proteinase which cleaves the nsp2/nsp3 site in the polyprotein. Also displays deubiquitinating and deISGylase activities. The deubiquitinating activity cleaves both ubiquitinated and ISGylated products and may therefore regulate ubiquitin and ISG15 dependent host innate immunity. The 3C-like serine proteinase chain is responsible for the majority of cleavages as it cleaves the C-terminus of the polyprotein. In terms of biological role, the helicase chain, which contains a zinc finger structure, displays RNA and DNA duplex-unwinding activities with 5' to 3' polarity. Its function is as follows. Plays a role in viral transcription/replication and prevents the simultaneous activation of host cell dsRNA sensors, such as MDA5/IFIH1, OAS, and PKR. Acts by degrading the 5'-polyuridines generated during replication of the poly(A) region of viral genomic and subgenomic RNAs. Catalyzes a two-step reaction in which a 2'3'-cyclic phosphate (2'3'-cP) is first generated by 2'-O transesterification, which is then hydrolyzed to a 3'-phosphate (3'-P). If not degraded, poly(U) RNA would hybridize with poly(A) RNA tails and activate host dsRNA sensors. The polypeptide is Replicase polyprotein 1ab (rep) (Equidae (horses)).